The chain runs to 215 residues: Thiopurine S-methyltransferase (215 aa).

Positions 10, 45, 66, and 123 each coordinate S-adenosyl-L-methionine.

It belongs to the class I-like SAM-binding methyltransferase superfamily. TPMT family.

The protein resides in the cytoplasm. It catalyses the reaction S-adenosyl-L-methionine + a thiopurine = S-adenosyl-L-homocysteine + a thiopurine S-methylether.. The protein is Thiopurine S-methyltransferase of Pseudomonas putida (strain W619).